Consider the following 346-residue polypeptide: MDQYCILGRIGEGAHGIVFKAKHVETGEIVALKKVALRRLEDGIPNQALREIKALQEIEDSQYVVQLKAVFPHGAGFVLAFEFMLSDLAEVVRHAQRPLAPAQVKSYLQMLLKGVAFCHANNIVHRDLKPANLLISASGQLKIADFGLARVFSPDGGRLYTHQVATRWYRAPELLYGARQYDQGVDLWAVGCIMGELLNGSPLFPGENDIEQLCCVLRILGTPSPRVWPEITELPDYNKISFKEQAPVPLEEVLPDASPQALDLLGQFLLYPPRQRIAASQALLHQYFFTAPLPAHPSELPIPQRPGGPAPKAHPGPPHVHDFHVDRPLEESLLNPELIRPFIPEG.

Residues 4-288 form the Protein kinase domain; sequence YCILGRIGEG…ASQALLHQYF (285 aa). ATP contacts are provided by residues 10–18 and Lys-33; that span reads IGEGAHGIV. Residue Asp-127 is the Proton acceptor of the active site. Residues 298 to 324 form a disordered region; it reads SELPIPQRPGGPAPKAHPGPPHVHDFH. Over residues 303-318 the composition is skewed to pro residues; sequence PQRPGGPAPKAHPGPP.

Belongs to the protein kinase superfamily. CMGC Ser/Thr protein kinase family. CDC2/CDKX subfamily. Monomer. Interacts with MAK. Interacts with TBC1D32.

The protein localises to the nucleus. It is found in the cytoplasm. The protein resides in the cell projection. Its subcellular location is the cilium. It catalyses the reaction L-seryl-[protein] + ATP = O-phospho-L-seryl-[protein] + ADP + H(+). It carries out the reaction L-threonyl-[protein] + ATP = O-phospho-L-threonyl-[protein] + ADP + H(+). In terms of biological role, involved in cell growth. Activates CDK2, a kinase involved in the control of the cell cycle, by phosphorylating residue 'Thr-160'. Required for high-level Shh responses in the developing neural tube. Together with TBC1D32, controls the structure of the primary cilium by coordinating assembly of the ciliary membrane and axoneme, allowing GLI2 to be properly activated in response to SHH signaling. The sequence is that of Cyclin-dependent kinase 20 (Cdk20) from Mus musculus (Mouse).